The primary structure comprises 319 residues: Acetyl esterase (319 aa).

Residues 91–93 carry the Involved in the stabilization of the negatively charged intermediate by the formation of the oxyanion hole motif; that stretch reads HGG. Catalysis depends on residues Ser165, Asp262, and His292.

This sequence belongs to the 'GDXG' lipolytic enzyme family. In terms of assembly, homodimer. Interacts with MalT and MelA.

Its subcellular location is the cytoplasm. Its function is as follows. Displays esterase activity towards short chain fatty esters (acyl chain length of up to 8 carbons). Able to hydrolyze triacetylglycerol (triacetin) and tributyrylglycerol (tributyrin), but not trioleylglycerol (triolein) or cholesterol oleate. Negatively regulates MalT activity by antagonizing maltotriose binding. Inhibits MelA galactosidase activity. This Shigella boydii serotype 4 (strain Sb227) protein is Acetyl esterase.